The sequence spans 380 residues: Erythronate-4-phosphate dehydrogenase (380 aa).

Substrate-binding residues include serine 45 and threonine 66. NAD(+) contacts are provided by residues 126-127, aspartate 146, threonine 174, 205-207, and aspartate 231; these read QV and ASR. Arginine 207 is an active-site residue. Glutamate 236 is an active-site residue. The Proton donor role is filled by histidine 253. Glycine 256 contributes to the NAD(+) binding site. Substrate is bound at residue tyrosine 257.

This sequence belongs to the D-isomer specific 2-hydroxyacid dehydrogenase family. PdxB subfamily. Homodimer.

Its subcellular location is the cytoplasm. The enzyme catalyses 4-phospho-D-erythronate + NAD(+) = (R)-3-hydroxy-2-oxo-4-phosphooxybutanoate + NADH + H(+). It functions in the pathway cofactor biosynthesis; pyridoxine 5'-phosphate biosynthesis; pyridoxine 5'-phosphate from D-erythrose 4-phosphate: step 2/5. Functionally, catalyzes the oxidation of erythronate-4-phosphate to 3-hydroxy-2-oxo-4-phosphonooxybutanoate. The protein is Erythronate-4-phosphate dehydrogenase of Azotobacter vinelandii (strain DJ / ATCC BAA-1303).